A 1268-amino-acid chain; its full sequence is ATP-dependent helicase/nuclease subunit A (1268 aa).

Positions 3-476 constitute a UvrD-like helicase ATP-binding domain; the sequence is TKWTEEQELA…IMLYKNFRSR (474 aa). Residue 24–31 coordinates ATP; that stretch reads AAAGSGKT. Residues 528 to 824 form the UvrD-like helicase C-terminal domain; that stretch reads IENLKVAGDI…RIMSIHKSKG (297 aa).

Belongs to the helicase family. AddA subfamily. Heterodimer of AddA and AddB/RexB. Requires Mg(2+) as cofactor.

It catalyses the reaction Couples ATP hydrolysis with the unwinding of duplex DNA by translocating in the 3'-5' direction.. It carries out the reaction ATP + H2O = ADP + phosphate + H(+). The heterodimer acts as both an ATP-dependent DNA helicase and an ATP-dependent, dual-direction single-stranded exonuclease. Recognizes the chi site generating a DNA molecule suitable for the initiation of homologous recombination. The AddA nuclease domain is required for chi fragment generation; this subunit has the helicase and 3' -&gt; 5' nuclease activities. This Clostridium perfringens (strain 13 / Type A) protein is ATP-dependent helicase/nuclease subunit A.